The primary structure comprises 429 residues: tRNA (guanine(9)-N1)-methyltransferase (429 aa).

One can recognise an SAM-dependent MTase TRM10-type domain in the interval 131–379 (KERKEAQRRI…AVIPIRKYAP (249 aa)). S-adenosyl-L-methionine is bound by residues 285-286 (LS), G305, 309-313 (DRNRH), C317, L331, and 344-346 (KAL). The active-site Proton acceptor is D309. Positions 383 to 429 (AKRAKTETKRNEKVEEEVECTSAEGEEDIGVIEESAEVDPEDVFSNQ) are disordered. A compositionally biased stretch (basic and acidic residues) spans 386-395 (AKTETKRNEK). A compositionally biased stretch (acidic residues) spans 396 to 429 (VEEEVECTSAEGEEDIGVIEESAEVDPEDVFSNQ).

The protein belongs to the class IV-like SAM-binding methyltransferase superfamily. TRM10 family. As to quaternary structure, monomer.

The protein resides in the cytoplasm. It is found in the nucleus. The catalysed reaction is guanosine(9) in tRNA + S-adenosyl-L-methionine = N(1)-methylguanosine(9) in tRNA + S-adenosyl-L-homocysteine + H(+). S-adenosyl-L-methionine-dependent guanine N(1)-methyltransferase that catalyzes the formation of N(1)-methylguanine at position 9 (m1G9) in cytoplasmic tRNA. The chain is tRNA (guanine(9)-N1)-methyltransferase from Cryptococcus neoformans var. neoformans serotype D (strain B-3501A) (Filobasidiella neoformans).